A 349-amino-acid chain; its full sequence is 4-hydroxythreonine-4-phosphate dehydrogenase (349 aa).

Residue T136 participates in substrate binding. A divalent metal cation-binding residues include H171, H216, and H281. Residues K289, N298, and R307 each contribute to the substrate site.

The protein belongs to the PdxA family. Homodimer. It depends on a divalent metal cation as a cofactor.

The protein resides in the cytoplasm. The enzyme catalyses 4-(phosphooxy)-L-threonine + NAD(+) = 3-amino-2-oxopropyl phosphate + CO2 + NADH. It participates in cofactor biosynthesis; pyridoxine 5'-phosphate biosynthesis; pyridoxine 5'-phosphate from D-erythrose 4-phosphate: step 4/5. Its function is as follows. Catalyzes the NAD(P)-dependent oxidation of 4-(phosphooxy)-L-threonine (HTP) into 2-amino-3-oxo-4-(phosphooxy)butyric acid which spontaneously decarboxylates to form 3-amino-2-oxopropyl phosphate (AHAP). The protein is 4-hydroxythreonine-4-phosphate dehydrogenase of Synechocystis sp. (strain ATCC 27184 / PCC 6803 / Kazusa).